A 116-amino-acid chain; its full sequence is PTS system N,N'-diacetylchitobiose-specific EIIA component (116 aa).

The region spanning Glu-15–Lys-113 is the PTS EIIA type-3 domain. His-89 acts as the Tele-phosphohistidine intermediate in catalysis. Position 89 is a phosphohistidine; by HPr (His-89).

Forms a complex with ChbB (EIIB). ChbA is a homotrimer. Requires Mg(2+) as cofactor.

The protein localises to the cytoplasm. The phosphoenolpyruvate-dependent sugar phosphotransferase system (sugar PTS), a major carbohydrate active transport system, catalyzes the phosphorylation of incoming sugar substrates concomitantly with their translocation across the cell membrane. The enzyme II ChbABC PTS system is involved in the transport of the chitin disaccharide N,N'-diacetylchitobiose (GlcNAc2). This Escherichia coli O157:H7 protein is PTS system N,N'-diacetylchitobiose-specific EIIA component (chbA).